The primary structure comprises 78 residues: Acyl carrier protein (78 aa).

The Carrier domain occupies 2–77 (SDIADRVKKI…DAIKFLEKNS (76 aa)). Ser37 is subject to O-(pantetheine 4'-phosphoryl)serine.

It belongs to the acyl carrier protein (ACP) family. 4'-phosphopantetheine is transferred from CoA to a specific serine of apo-ACP by AcpS. This modification is essential for activity because fatty acids are bound in thioester linkage to the sulfhydryl of the prosthetic group.

It is found in the cytoplasm. Its pathway is lipid metabolism; fatty acid biosynthesis. Its function is as follows. Carrier of the growing fatty acid chain in fatty acid biosynthesis. The sequence is that of Acyl carrier protein from Methylobacterium sp. (strain 4-46).